We begin with the raw amino-acid sequence, 122 residues long: Large ribosomal subunit protein uL18 (122 aa).

The tract at residues 1 to 27 (MATLSKKQQTQKRHKRLRRHLNGTNHR) is disordered. Positions 9–27 (QTQKRHKRLRRHLNGTNHR) are enriched in basic residues.

The protein belongs to the universal ribosomal protein uL18 family. In terms of assembly, part of the 50S ribosomal subunit; part of the 5S rRNA/L5/L18/L25 subcomplex. Contacts the 5S and 23S rRNAs.

In terms of biological role, this is one of the proteins that bind and probably mediate the attachment of the 5S RNA into the large ribosomal subunit, where it forms part of the central protuberance. The polypeptide is Large ribosomal subunit protein uL18 (Prochlorococcus marinus (strain MIT 9211)).